The primary structure comprises 237 residues: MLGVSLGARLLRGVGGRRGQFGARGVSEGSAAMAAGESMAQRMVWVDLEMTGLDIEKDQIIEMACLITDSDLNILAEGPNLIIKQPDELLDSMSDWCKEHHGKSGLTKAVKESTVTLQQAEYEFLSFVRQQTPPGLCPLAGNSVHADKKFLDKHMPQFMKHLHYRIIDVSTVKELCRRWYPEDYEFAPKKAASHRALDDISESIKELQFYRNNIFKKKTDEKKRKIIENGETEKPVS.

A mitochondrion-targeting transit peptide spans 1 to 25 (MLGVSLGARLLRGVGGRRGQFGARG). The region spanning 43 to 207 (MVWVDLEMTG…DDISESIKEL (165 aa)) is the Exonuclease domain. Mg(2+) contacts are provided by aspartate 47 and glutamate 49. Serine 92 is subject to Phosphoserine. Tyrosine 122 is subject to Phosphotyrosine. Aspartate 147 contributes to the Mg(2+) binding site. N6-acetyllysine is present on lysine 173. The active site involves histidine 194. Position 199 (aspartate 199) interacts with Mg(2+).

This sequence belongs to the oligoribonuclease family. Homodimer. Homotetramer. It depends on Mn(2+) as a cofactor. Mg(2+) serves as cofactor.

The protein resides in the mitochondrion intermembrane space. Its subcellular location is the mitochondrion matrix. The protein localises to the mitochondrion. It localises to the cytoplasm. It is found in the nucleus. In terms of biological role, 3'-to-5'exoribonuclease that preferentially degrades DNA and RNA oligonucleotides composed of only two nucleotides. Binds and degrades longer oligonucleotides with a lower affinity. Plays dual roles in mitochondria, scavenging nanoRNAs (small RNA oligonucleotides of &lt;5 nucleotides) that are produced by the degradosome and clearing short RNAs that are generated by RNA processing. Essential for correct initiation of mitochondrial transcription, degrading mitochondrial RNA dinucleotides to prevent RNA-primed transcription at non-canonical sites in the mitochondrial genome. Essential for embryonic development. In Mus musculus (Mouse), this protein is Oligoribonuclease, mitochondrial (Rexo2).